We begin with the raw amino-acid sequence, 61 residues long: Large ribosomal subunit protein uL30 (61 aa).

This sequence belongs to the universal ribosomal protein uL30 family. Part of the 50S ribosomal subunit.

The sequence is that of Large ribosomal subunit protein uL30 from Thermosipho melanesiensis (strain DSM 12029 / CIP 104789 / BI429).